A 416-amino-acid polypeptide reads, in one-letter code: Neurotensin receptor type 2 (416 aa).

Topologically, residues 1-32 (METSSLWPPRPSPSAGLSLEARLGVDTRLWAK) are extracellular. Residues 33–55 (VLFTALYSLIFALGTAGNALSVH) traverse the membrane as a helical segment. Over 56–64 (VVLKARAGR) the chain is Cytoplasmic. A helical transmembrane segment spans residues 65–87 (PGRLRYHVLSLALSALLLLLISV). Topologically, residues 88–109 (PMELYNFVWSHYPWVFGDLGCR) are extracellular. Cysteine 108 and cysteine 194 are joined by a disulfide. A helical transmembrane segment spans residues 110–131 (GYYFVRELCAYATVLSVASLSA). The Cytoplasmic segment spans residues 132-154 (ERCLAVCQPLRARRLLTPRRTRR). The chain crosses the membrane as a helical span at residues 155 to 176 (LLSLVWVASLGLALPMAVIMGQ). Residues 177 to 217 (KHEMERADGEPEPASRVCTVLVSRATLQVFIQVNVLVSFVL) lie on the Extracellular side of the membrane. Residues 218 to 237 (PLALTAFLNGITVNHLVALY) traverse the membrane as a helical segment. At 238-297 (SQVPSASAQVNSIPSRLELLSEEGLLGFITWRKTLSLGVQASLVRHKDASQIRSLQHSAQ) the chain is on the cytoplasmic side. Residues 298-318 (VLRAIVAVYVICWLPYHARRL) traverse the membrane as a helical segment. At 319–337 (MYCYIPDDGWTDELYDFYH) the chain is on the extracellular side. The helical transmembrane segment at 338 to 358 (YFYMVTNTLFYVSSAVTPVLY) threads the bilayer. Residues 359–416 (NAVSSSFRKLFLESLSSLCGEQRSVVPLPQEAPESTTSTYSFRLWGSPRNPSLGEIQV) are Cytoplasmic-facing. Cysteine 377 carries S-palmitoyl cysteine lipidation. A Phosphoserine modification is found at serine 410.

This sequence belongs to the G-protein coupled receptor 1 family. Neurotensin receptor subfamily. NTSR2 sub-subfamily. In terms of tissue distribution, expressed maximally in the cerebellum, hippocampus, piriform cortex and neocortex of adult brain.

Its subcellular location is the cell membrane. In terms of biological role, receptor for the tridecapeptide neurotensin. It is associated with G proteins that activate a phosphatidylinositol-calcium second messenger system. The protein is Neurotensin receptor type 2 (Ntsr2) of Mus musculus (Mouse).